The sequence spans 370 residues: tRNA-specific 2-thiouridylase MnmA (370 aa).

Residues 24–31 (AMSGGVDS) and Leu-50 contribute to the ATP site. The active-site Nucleophile is Cys-118. Cys-118 and Cys-214 are disulfide-bonded. ATP is bound at residue Gly-142. The interval 164 to 166 (KDQ) is interaction with tRNA. Cys-214 (cysteine persulfide intermediate) is an active-site residue.

It belongs to the MnmA/TRMU family.

The protein localises to the cytoplasm. It catalyses the reaction S-sulfanyl-L-cysteinyl-[protein] + uridine(34) in tRNA + AH2 + ATP = 2-thiouridine(34) in tRNA + L-cysteinyl-[protein] + A + AMP + diphosphate + H(+). Its function is as follows. Catalyzes the 2-thiolation of uridine at the wobble position (U34) of tRNA, leading to the formation of s(2)U34. This chain is tRNA-specific 2-thiouridylase MnmA, found in Ehrlichia ruminantium (strain Welgevonden).